The primary structure comprises 410 residues: Extracellular serine proteinase (410 aa).

The N-terminal stretch at 1–19 (MKRGGLWLLLGLLVLSACS) is a signal peptide. The propeptide occupies 20 to 132 (SNPPAASTQE…IEADQEVRAF (113 aa)). An Inhibitor I9 domain is found at 45–130 (YIVVYKENAD…AYIEADQEVR (86 aa)). A Peptidase S8 domain is found at 139–410 (TWGLDRIDQR…SPNLLLYTPF (272 aa)). Active-site charge relay system residues include Asp-171, His-204, and Ser-356.

This sequence belongs to the peptidase S8 family. In terms of processing, contains 4 Cys residues that form two disulfide bonds. Glycosylated. This proteinase has a 0.7% carbohydrate content.

The protein resides in the secreted. Serine proteinase with preferred activity for amino acids with aromatic side groups at the P1' side of the scissible bond. This is Extracellular serine proteinase from Thermus sp. (strain Rt41A).